Reading from the N-terminus, the 171-residue chain is Large ribosomal subunit protein uL10 (171 aa).

Belongs to the universal ribosomal protein uL10 family. In terms of assembly, part of the ribosomal stalk of the 50S ribosomal subunit. The N-terminus interacts with L11 and the large rRNA to form the base of the stalk. The C-terminus forms an elongated spine to which L12 dimers bind in a sequential fashion forming a multimeric L10(L12)X complex.

Functionally, forms part of the ribosomal stalk, playing a central role in the interaction of the ribosome with GTP-bound translation factors. This is Large ribosomal subunit protein uL10 from Methylocella silvestris (strain DSM 15510 / CIP 108128 / LMG 27833 / NCIMB 13906 / BL2).